The primary structure comprises 87 residues: Neurotoxin Cex1 (87 aa).

The first 19 residues, 1 to 19, serve as a signal peptide directing secretion; that stretch reads MNSLLMITTCLVLFGTVWA. Positions 20–85 constitute an LCN-type CS-alpha/beta domain; it reads KEGYLVSKST…TYPIPGKSCG (66 aa). Disulfide bonds link cysteine 31/cysteine 84, cysteine 35/cysteine 60, cysteine 44/cysteine 65, and cysteine 48/cysteine 67. Cysteine 84 carries the cysteine amide modification. Positions 85–87 are excised as a propeptide; sequence GKK.

It belongs to the long (4 C-C) scorpion toxin superfamily. Sodium channel inhibitor family. Beta subfamily. In terms of tissue distribution, expressed by the venom gland.

The protein localises to the secreted. In terms of biological role, beta toxins bind voltage-independently at site-4 of sodium channels (Nav) and shift the voltage of activation toward more negative potentials thereby affecting sodium channel activation and promoting spontaneous and repetitive firing. In Centruroides exilicauda (Bark scorpion), this protein is Neurotoxin Cex1.